The primary structure comprises 627 residues: DEAD-box ATP-dependent RNA helicase 35A (627 aa).

Low complexity-rich tracts occupy residues 1–15 and 52–61; these read MAAA…AAAA and SSSAAEAASD. 2 disordered regions span residues 1 to 23 and 40 to 85; these read MAAA…EDNY and LRRL…LEAS. A compositionally biased stretch (pro residues) spans 62–72; that stretch reads LPPPPPPPPNQ. A Q motif motif is present at residues 182–210; that stretch reads RDFRDLRLPEPMLRKLREKGIVQPTPIQV. The 185-residue stretch at 213–397 folds into the Helicase ATP-binding domain; it reads LPVVLSGRDM…KSALVKPVIV (185 aa). Residue 226-233 participates in ATP binding; it reads AFTGSGKT. A DEAD box motif is present at residues 345–348; sequence DEAD. Positions 408 to 568 constitute a Helicase C-terminal domain; the sequence is DVIQEVEYVK…RIPPVLAELN (161 aa). Residues 584–601 form a CCHC-type zinc finger; sequence KGCAYCGGLGHRVTDCPK.

This sequence belongs to the DEAD box helicase family. DDX41 subfamily.

The enzyme catalyses ATP + H2O = ADP + phosphate + H(+). In Oryza sativa subsp. japonica (Rice), this protein is DEAD-box ATP-dependent RNA helicase 35A.